The following is a 386-amino-acid chain: 4-hydroxy-3-methylbut-2-en-1-yl diphosphate synthase (flavodoxin) (386 aa).

Positions 281, 284, 316, and 323 each coordinate [4Fe-4S] cluster.

Belongs to the IspG family. Requires [4Fe-4S] cluster as cofactor.

It catalyses the reaction (2E)-4-hydroxy-3-methylbut-2-enyl diphosphate + oxidized [flavodoxin] + H2O + 2 H(+) = 2-C-methyl-D-erythritol 2,4-cyclic diphosphate + reduced [flavodoxin]. Its pathway is isoprenoid biosynthesis; isopentenyl diphosphate biosynthesis via DXP pathway; isopentenyl diphosphate from 1-deoxy-D-xylulose 5-phosphate: step 5/6. Its function is as follows. Converts 2C-methyl-D-erythritol 2,4-cyclodiphosphate (ME-2,4cPP) into 1-hydroxy-2-methyl-2-(E)-butenyl 4-diphosphate. The polypeptide is 4-hydroxy-3-methylbut-2-en-1-yl diphosphate synthase (flavodoxin) (Corynebacterium jeikeium (strain K411)).